A 367-amino-acid polypeptide reads, in one-letter code: Coiled-coil domain-containing protein 34 (367 aa).

Ser55 carries the post-translational modification Phosphoserine. Disordered regions lie at residues 77–105 (FPFG…KVES), 191–228 (QKKN…KAKE), and 310–349 (YNPI…SSLA). The span at 82-97 (DDSEGEDEEALDEDAR) shows a compositional bias: acidic residues. Coiled-coil stretches lie at residues 87 to 108 (EDEE…SLEG) and 153 to 280 (RLQQ…AKNK). Over residues 197 to 228 (ERKEREQKINKEMEEKEAKKREKEHLQEKAKE) the composition is skewed to basic and acidic residues. Residues 339 to 349 (ASQPLPSSSLA) show a composition bias toward low complexity.

Expressed in testis and sperm.

The protein resides in the cell projection. Its subcellular location is the cilium. It is found in the flagellum. In terms of biological role, involved in spermatogenesis. Has a probable role in anterograde intraflagellar transport which is essential for the formation of sperm flagella. The sequence is that of Coiled-coil domain-containing protein 34 (Ccdc34) from Mus musculus (Mouse).